The sequence spans 927 residues: Probable RNA-dependent RNA polymerase 4 (927 aa).

The segment at 98 to 135 (GESPVQFPRTPGKKSCRASQAEVSLDREDPSPKFLRGD) is disordered. The span at 121 to 135 (SLDREDPSPKFLRGD) shows a compositional bias: basic and acidic residues.

Belongs to the RdRP family.

The enzyme catalyses RNA(n) + a ribonucleoside 5'-triphosphate = RNA(n+1) + diphosphate. In terms of biological role, probably involved in the RNA silencing pathway and required for the generation of small interfering RNAs (siRNAs). The sequence is that of Probable RNA-dependent RNA polymerase 4 (RDR4) from Arabidopsis thaliana (Mouse-ear cress).